The sequence spans 403 residues: Phosphoglycerate kinase (403 aa).

Substrate is bound by residues 22 to 24, Arg-37, 60 to 63, Arg-119, and Arg-156; these read DLN and HLGR. ATP is bound by residues Lys-206, Gly-302, Glu-333, and 359–362; that span reads GGDS.

It belongs to the phosphoglycerate kinase family. As to quaternary structure, monomer.

The protein localises to the cytoplasm. It carries out the reaction (2R)-3-phosphoglycerate + ATP = (2R)-3-phospho-glyceroyl phosphate + ADP. Its pathway is carbohydrate degradation; glycolysis; pyruvate from D-glyceraldehyde 3-phosphate: step 2/5. In Leifsonia xyli subsp. xyli (strain CTCB07), this protein is Phosphoglycerate kinase.